The sequence spans 553 residues: Meiotic expression up-regulated protein 18 (553 aa).

The tract at residues 267 to 305 (SNETLCSNDSKHRIARLKNEDNTQKPISKKRKSKKASHK) is disordered. Residues 275–289 (DSKHRIARLKNEDNT) show a composition bias toward basic and acidic residues. The span at 293–304 (ISKKRKSKKASH) shows a compositional bias: basic residues.

This chain is Meiotic expression up-regulated protein 18 (meu18), found in Schizosaccharomyces pombe (strain 972 / ATCC 24843) (Fission yeast).